The following is a 166-amino-acid chain: ATP synthase subunit b (166 aa).

A helical membrane pass occupies residues threonine 15–valine 37.

Belongs to the ATPase B chain family. F-type ATPases have 2 components, F(1) - the catalytic core - and F(0) - the membrane proton channel. F(1) has five subunits: alpha(3), beta(3), gamma(1), delta(1), epsilon(1). F(0) has three main subunits: a(1), b(2) and c(10-14). The alpha and beta chains form an alternating ring which encloses part of the gamma chain. F(1) is attached to F(0) by a central stalk formed by the gamma and epsilon chains, while a peripheral stalk is formed by the delta and b chains.

Its subcellular location is the cell membrane. Functionally, f(1)F(0) ATP synthase produces ATP from ADP in the presence of a proton or sodium gradient. F-type ATPases consist of two structural domains, F(1) containing the extramembraneous catalytic core and F(0) containing the membrane proton channel, linked together by a central stalk and a peripheral stalk. During catalysis, ATP synthesis in the catalytic domain of F(1) is coupled via a rotary mechanism of the central stalk subunits to proton translocation. Component of the F(0) channel, it forms part of the peripheral stalk, linking F(1) to F(0). The protein is ATP synthase subunit b of Lactobacillus johnsonii (strain CNCM I-12250 / La1 / NCC 533).